Consider the following 553-residue polypeptide: Methionine--tRNA ligase (553 aa).

The 'HIGH' region motif lies at 12-22 (PYANSQLHLGH). Zn(2+) is bound by residues cysteine 144, cysteine 147, cysteine 157, and cysteine 160. A 'KMSKS' region motif is present at residues 332–336 (KFSKS). Lysine 335 provides a ligand contact to ATP.

The protein belongs to the class-I aminoacyl-tRNA synthetase family. MetG type 1 subfamily. In terms of assembly, monomer. Zn(2+) is required as a cofactor.

It is found in the cytoplasm. It carries out the reaction tRNA(Met) + L-methionine + ATP = L-methionyl-tRNA(Met) + AMP + diphosphate. Functionally, is required not only for elongation of protein synthesis but also for the initiation of all mRNA translation through initiator tRNA(fMet) aminoacylation. The protein is Methionine--tRNA ligase of Dehalococcoides mccartyi (strain CBDB1).